A 99-amino-acid chain; its full sequence is Large ribosomal subunit protein uL23 (99 aa).

The protein belongs to the universal ribosomal protein uL23 family. As to quaternary structure, part of the 50S ribosomal subunit. Contacts protein L29, and trigger factor when it is bound to the ribosome.

Its function is as follows. One of the early assembly proteins it binds 23S rRNA. One of the proteins that surrounds the polypeptide exit tunnel on the outside of the ribosome. Forms the main docking site for trigger factor binding to the ribosome. The chain is Large ribosomal subunit protein uL23 from Ectopseudomonas mendocina (strain ymp) (Pseudomonas mendocina).